Here is a 434-residue protein sequence, read N- to C-terminus: Glutamyl-tRNA reductase 2 (434 aa).

Residues 57–60 (TCNR), Ser113, 118–120 (DFE), and Gln124 each bind substrate. Catalysis depends on Cys58, which acts as the Nucleophile. NADP(+) is bound at residue 193–198 (GTGKIG).

This sequence belongs to the glutamyl-tRNA reductase family. Homodimer.

The enzyme catalyses (S)-4-amino-5-oxopentanoate + tRNA(Glu) + NADP(+) = L-glutamyl-tRNA(Glu) + NADPH + H(+). Its pathway is porphyrin-containing compound metabolism; protoporphyrin-IX biosynthesis; 5-aminolevulinate from L-glutamyl-tRNA(Glu): step 1/2. In terms of biological role, catalyzes the NADPH-dependent reduction of glutamyl-tRNA(Glu) to glutamate 1-semialdehyde (GSA). The polypeptide is Glutamyl-tRNA reductase 2 (Flavobacterium johnsoniae (strain ATCC 17061 / DSM 2064 / JCM 8514 / BCRC 14874 / CCUG 350202 / NBRC 14942 / NCIMB 11054 / UW101) (Cytophaga johnsonae)).